A 647-amino-acid chain; its full sequence is tRNA 5-methylaminomethyl-2-thiouridine biosynthesis bifunctional protein MnmC (647 aa).

The tract at residues 1–235 is tRNA (mnm(5)s(2)U34)-methyltransferase; that stretch reads MSIPPFSQAS…KRDMLCGRFT (235 aa). Residues 250-647 are FAD-dependent cmnm(5)s(2)U34 oxidoreductase; sequence IGGGIAGTAS…RGLACHPLRR (398 aa).

It in the N-terminal section; belongs to the methyltransferase superfamily. tRNA (mnm(5)s(2)U34)-methyltransferase family. The protein in the C-terminal section; belongs to the DAO family. FAD is required as a cofactor.

The protein resides in the cytoplasm. It catalyses the reaction 5-aminomethyl-2-thiouridine(34) in tRNA + S-adenosyl-L-methionine = 5-methylaminomethyl-2-thiouridine(34) in tRNA + S-adenosyl-L-homocysteine + H(+). Its function is as follows. Catalyzes the last two steps in the biosynthesis of 5-methylaminomethyl-2-thiouridine (mnm(5)s(2)U) at the wobble position (U34) in tRNA. Catalyzes the FAD-dependent demodification of cmnm(5)s(2)U34 to nm(5)s(2)U34, followed by the transfer of a methyl group from S-adenosyl-L-methionine to nm(5)s(2)U34, to form mnm(5)s(2)U34. The sequence is that of tRNA 5-methylaminomethyl-2-thiouridine biosynthesis bifunctional protein MnmC from Methylobacillus flagellatus (strain ATCC 51484 / DSM 6875 / VKM B-1610 / KT).